The chain runs to 156 residues: Small ribosomal subunit protein uS7 (156 aa).

This sequence belongs to the universal ribosomal protein uS7 family. In terms of assembly, part of the 30S ribosomal subunit. Contacts proteins S9 and S11.

Functionally, one of the primary rRNA binding proteins, it binds directly to 16S rRNA where it nucleates assembly of the head domain of the 30S subunit. Is located at the subunit interface close to the decoding center, probably blocks exit of the E-site tRNA. This Geobacter sulfurreducens (strain ATCC 51573 / DSM 12127 / PCA) protein is Small ribosomal subunit protein uS7.